The chain runs to 184 residues: Two-component response regulator ARR5 (184 aa).

Positions 26–154 (HVLAVDDSMV…DVKRLRDSLM (129 aa)) constitute a Response regulatory domain. 4-aspartylphosphate is present on Asp-87.

This sequence belongs to the ARR family. Type-A subfamily. Two-component system major event consists of a His-to-Asp phosphorelay between a sensor histidine kinase (HK) and a response regulator (RR). In plants, the His-to-Asp phosphorelay involves an additional intermediate named Histidine-containing phosphotransfer protein (HPt). This multistep phosphorelay consists of a His-Asp-His-Asp sequential transfer of a phosphate group between first a His and an Asp of the HK protein, followed by the transfer to a conserved His of the HPt protein and finally the transfer to an Asp in the receiver domain of the RR protein. As to expression, predominantly expressed in roots and shoot apical meristems.

Its subcellular location is the nucleus. Its function is as follows. Functions as a response regulator involved in His-to-Asp phosphorelay signal transduction system. Phosphorylation of the Asp residue in the receiver domain activates the ability of the protein to promote the transcription of target genes. Type-A response regulators seem to act as negative regulators of the cytokinin signaling. In Arabidopsis thaliana (Mouse-ear cress), this protein is Two-component response regulator ARR5 (ARR5).